An 807-amino-acid chain; its full sequence is Phenylalanine--tRNA ligase beta subunit (807 aa).

The tRNA-binding domain occupies 39-156 (AGEFSGVVIG…SDAPLGQCVR (118 aa)). One can recognise a B5 domain in the interval 409 to 488 (PQTKDVNLRR…RIFGYNNIPN (80 aa)). 4 residues coordinate Mg(2+): Asp-466, Asp-472, Glu-475, and Glu-476. One can recognise an FDX-ACB domain in the interval 713 to 806 (SRFPANRRDL…LKTELNASLR (94 aa)).

This sequence belongs to the phenylalanyl-tRNA synthetase beta subunit family. Type 1 subfamily. Tetramer of two alpha and two beta subunits. It depends on Mg(2+) as a cofactor.

It is found in the cytoplasm. The catalysed reaction is tRNA(Phe) + L-phenylalanine + ATP = L-phenylalanyl-tRNA(Phe) + AMP + diphosphate + H(+). This chain is Phenylalanine--tRNA ligase beta subunit, found in Colwellia psychrerythraea (strain 34H / ATCC BAA-681) (Vibrio psychroerythus).